We begin with the raw amino-acid sequence, 462 residues long: Elongation factor 1-alpha (462 aa).

Glycine 2 is subject to N,N,N-trimethylglycine. Lysine 3 bears the N6,N6-dimethyllysine; alternate mark. At lysine 3 the chain carries N6-methyllysine; alternate. The tr-type G domain occupies 5–242; it reads KAHVNVVVIG…DAIEPPVRPS (238 aa). Residues 14-21 are G1; it reads GHVDSGKS. 14 to 21 provides a ligand contact to GTP; that stretch reads GHVDSGKS. Position 30 is an N6-methyllysine (lysine 30). The interval 70–74 is G2; the sequence is GITID. Lysine 79 is modified (N6,N6,N6-trimethyllysine). A G3 region spans residues 91–94; the sequence is DAPG. GTP is bound by residues 91-95 and 153-156; these read DAPGH and NKMD. The interval 153–156 is G4; it reads NKMD. The G5 stretch occupies residues 192-194; the sequence is SGW. Lysine 318 carries the post-translational modification N6,N6-dimethyllysine; alternate. Position 318 is an N6-methyllysine; alternate (lysine 318). The residue at position 392 (lysine 392) is an N6-methyllysine.

The protein belongs to the TRAFAC class translation factor GTPase superfamily. Classic translation factor GTPase family. EF-Tu/EF-1A subfamily.

It is found in the cytoplasm. Its function is as follows. This protein promotes the GTP-dependent binding of aminoacyl-tRNA to the A-site of ribosomes during protein biosynthesis. This is Elongation factor 1-alpha (TEF1) from Serendipita indica (Root endophyte fungus).